A 383-amino-acid polypeptide reads, in one-letter code: Meiotically up-regulated gene 93 protein (383 aa).

The TPR repeat unit spans residues 75 to 108 (KKVIWRRGLAYLRLGHPHLANRDWEHSLELDPNN).

It is found in the cytoplasm. Its subcellular location is the nucleus. Has a role in meiosis. This is Meiotically up-regulated gene 93 protein (mug93) from Schizosaccharomyces pombe (strain 972 / ATCC 24843) (Fission yeast).